The chain runs to 120 residues: Spermidine export protein MdtJ (120 aa).

The next 4 membrane-spanning stretches (helical) occupy residues 1 to 21 (MFYW…TLSM), 31 to 51 (TGFI…SFAV), 54 to 74 (IALG…ITLF), and 81 to 101 (EALS…IVLI).

Belongs to the drug/metabolite transporter (DMT) superfamily. Small multidrug resistance (SMR) (TC 2.A.7.1) family. MdtJ subfamily. In terms of assembly, forms a complex with MdtI.

It localises to the cell inner membrane. In terms of biological role, catalyzes the excretion of spermidine. The polypeptide is Spermidine export protein MdtJ (Enterobacter sp. (strain 638)).